Reading from the N-terminus, the 258-residue chain is Acetylglutamate kinase (258 aa).

Substrate-binding positions include 41–42 (GG), R63, and N156.

It belongs to the acetylglutamate kinase family. ArgB subfamily.

The protein resides in the cytoplasm. It carries out the reaction N-acetyl-L-glutamate + ATP = N-acetyl-L-glutamyl 5-phosphate + ADP. It participates in amino-acid biosynthesis; L-arginine biosynthesis; N(2)-acetyl-L-ornithine from L-glutamate: step 2/4. Functionally, catalyzes the ATP-dependent phosphorylation of N-acetyl-L-glutamate. This is Acetylglutamate kinase from Geobacillus kaustophilus (strain HTA426).